The sequence spans 258 residues: Small ribosomal subunit protein mS23 (258 aa).

The protein belongs to the mitochondrion-specific ribosomal protein mS23 family. Component of the mitochondrial small ribosomal subunit.

The protein localises to the mitochondrion. This chain is Small ribosomal subunit protein mS23, found in Aspergillus fumigatus (strain CBS 144.89 / FGSC A1163 / CEA10) (Neosartorya fumigata).